The chain runs to 63 residues: Large ribosomal subunit protein uL29 (63 aa).

It belongs to the universal ribosomal protein uL29 family.

The chain is Large ribosomal subunit protein uL29 from Histophilus somni (strain 129Pt) (Haemophilus somnus).